The chain runs to 1243 residues: Tau-tubulin kinase 2 (1243 aa).

One can recognise a Protein kinase domain in the interval 21 to 284; it reads WKVLRKIGGG…LLTSVFDNSI (264 aa). Residues 27 to 35 and Lys50 contribute to the ATP site; that span reads IGGGGFGEI. The Proton acceptor role is filled by Asp141. Phosphoserine is present on Ser445. The segment covering 674-683 has biased composition (polar residues); the sequence is VASTQSTSGS. Disordered stretches follow at residues 674–695 and 737–761; these read VASTQSTSGSFHYGPQPEKKDL and TGHDMLPNMRDGDTSQDLGPKDPPD. Ser786 carries the phosphoserine modification. Residues 1063–1086 are disordered; sequence QINGSASPQFLPRPPPGKPPVRPG. Residues 1073–1084 are compositionally biased toward pro residues; sequence LPRPPPGKPPVR. Ser1102 is subject to Phosphoserine. Polar residues predominate over residues 1115-1129; that stretch reads QNGSQKSRSTTQCKS. Residues 1115–1243 are disordered; sequence QNGSQKSRST…KSKPASKLSR (129 aa). 3 stretches are compositionally biased toward low complexity: residues 1144–1170, 1187–1202, and 1227–1243; these read VVPRRSPSASPRSSSLPRTSSSSPSRA, SKSPPSHSGSSSSRRS, and SSKTPPGKSKPASKLSR.

This sequence belongs to the protein kinase superfamily. CK1 Ser/Thr protein kinase family. In terms of assembly, interacts with CEP164. Interacts with MCRS1; the interaction is required for recruitment of TTBK2 to the mother centriole.

It localises to the cell projection. The protein resides in the cilium. It is found in the cytoplasm. The protein localises to the cytoskeleton. Its subcellular location is the cilium basal body. It localises to the microtubule organizing center. The protein resides in the centrosome. It is found in the centriole. The protein localises to the cytosol. Its subcellular location is the nucleus. It catalyses the reaction L-seryl-[protein] + ATP = O-phospho-L-seryl-[protein] + ADP + H(+). It carries out the reaction L-threonyl-[protein] + ATP = O-phospho-L-threonyl-[protein] + ADP + H(+). Its function is as follows. Serine/threonine kinase that acts as a key regulator of ciliogenesis: controls the initiation of ciliogenesis by binding to the distal end of the basal body and promoting the removal of CCP110, which caps the mother centriole, leading to the recruitment of IFT proteins, which build the ciliary axoneme. Has some substrate preference for proteins that are already phosphorylated on a Tyr residue at the +2 position relative to the phosphorylation site. Able to phosphorylate tau on serines in vitro. Phosphorylates MPHOSPH9 which promotes its ubiquitination and proteasomal degradation, loss of MPHOSPH9 facilitates the removal of the CP110-CEP97 complex (a negative regulator of ciliogenesis) from the mother centrioles, promoting the initiation of ciliogenesis. Required for recruitment of CPLANE2 and INTU to the mother centriole. The polypeptide is Tau-tubulin kinase 2 (Ttbk2) (Mus musculus (Mouse)).